The sequence spans 200 residues: NADH-quinone oxidoreductase subunit B (200 aa).

[4Fe-4S] cluster is bound by residues Cys78, Cys79, Cys144, and Cys174.

The protein belongs to the complex I 20 kDa subunit family. In terms of assembly, NDH-1 is composed of 14 different subunits. Subunits NuoB, C, D, E, F, and G constitute the peripheral sector of the complex. Requires [4Fe-4S] cluster as cofactor.

Its subcellular location is the cell membrane. The enzyme catalyses a quinone + NADH + 5 H(+)(in) = a quinol + NAD(+) + 4 H(+)(out). In terms of biological role, NDH-1 shuttles electrons from NADH, via FMN and iron-sulfur (Fe-S) centers, to quinones in the respiratory chain. The immediate electron acceptor for the enzyme in this species is believed to be ubiquinone. Couples the redox reaction to proton translocation (for every two electrons transferred, four hydrogen ions are translocated across the cytoplasmic membrane), and thus conserves the redox energy in a proton gradient. The chain is NADH-quinone oxidoreductase subunit B from Dehalococcoides mccartyi (strain CBDB1).